We begin with the raw amino-acid sequence, 366 residues long: Tyrosine--tRNA ligase (366 aa).

Residues Y41, Y167, Q171, D174, and Q189 each contribute to the L-tyrosine site. The short motif at 241-245 is the 'KMSKS' region element; it reads KMSKS. K244 is an ATP binding site.

The protein belongs to the class-I aminoacyl-tRNA synthetase family. TyrS type 4 subfamily. In terms of assembly, homodimer.

The protein localises to the cytoplasm. It carries out the reaction tRNA(Tyr) + L-tyrosine + ATP = L-tyrosyl-tRNA(Tyr) + AMP + diphosphate + H(+). In terms of biological role, catalyzes the attachment of tyrosine to tRNA(Tyr) in a two-step reaction: tyrosine is first activated by ATP to form Tyr-AMP and then transferred to the acceptor end of tRNA(Tyr). This chain is Tyrosine--tRNA ligase, found in Saccharolobus solfataricus (strain ATCC 35092 / DSM 1617 / JCM 11322 / P2) (Sulfolobus solfataricus).